A 943-amino-acid polypeptide reads, in one-letter code: Isoleucine--tRNA ligase (943 aa).

A 'HIGH' region motif is present at residues 58 to 68; it reads PYANGKIHIGH. Residue Glu567 coordinates L-isoleucyl-5'-AMP. The short motif at 608 to 612 is the 'KMSKS' region element; the sequence is KMSKS. Lys611 contributes to the ATP binding site. Residues Cys906, Cys909, Cys926, and Cys929 each coordinate Zn(2+).

The protein belongs to the class-I aminoacyl-tRNA synthetase family. IleS type 1 subfamily. Monomer. It depends on Zn(2+) as a cofactor.

Its subcellular location is the cytoplasm. It carries out the reaction tRNA(Ile) + L-isoleucine + ATP = L-isoleucyl-tRNA(Ile) + AMP + diphosphate. Functionally, catalyzes the attachment of isoleucine to tRNA(Ile). As IleRS can inadvertently accommodate and process structurally similar amino acids such as valine, to avoid such errors it has two additional distinct tRNA(Ile)-dependent editing activities. One activity is designated as 'pretransfer' editing and involves the hydrolysis of activated Val-AMP. The other activity is designated 'posttransfer' editing and involves deacylation of mischarged Val-tRNA(Ile). The protein is Isoleucine--tRNA ligase of Pseudomonas putida (strain GB-1).